A 536-amino-acid polypeptide reads, in one-letter code: Chaperonin GroEL (536 aa).

Residues 29–32 (TLGP), 86–90 (DGTTT), glycine 412, and aspartate 493 each bind ATP.

Belongs to the chaperonin (HSP60) family. Forms a cylinder of 14 subunits composed of two heptameric rings stacked back-to-back. Interacts with the co-chaperonin GroES.

Its subcellular location is the cytoplasm. The catalysed reaction is ATP + H2O + a folded polypeptide = ADP + phosphate + an unfolded polypeptide.. Functionally, together with its co-chaperonin GroES, plays an essential role in assisting protein folding. The GroEL-GroES system forms a nano-cage that allows encapsulation of the non-native substrate proteins and provides a physical environment optimized to promote and accelerate protein folding. This chain is Chaperonin GroEL, found in Onion yellows phytoplasma (strain OY-M).